The following is a 129-amino-acid chain: Large ribosomal subunit protein bL12 (129 aa).

Belongs to the bacterial ribosomal protein bL12 family. Homodimer. Part of the ribosomal stalk of the 50S ribosomal subunit. Forms a multimeric L10(L12)X complex, where L10 forms an elongated spine to which 2 to 4 L12 dimers bind in a sequential fashion. Binds GTP-bound translation factors.

Forms part of the ribosomal stalk which helps the ribosome interact with GTP-bound translation factors. Is thus essential for accurate translation. In Synechococcus sp. (strain CC9605), this protein is Large ribosomal subunit protein bL12.